The chain runs to 1070 residues: DNA-directed RNA polymerase subunit beta (1070 aa).

It belongs to the RNA polymerase beta chain family. In terms of assembly, in plastids the minimal PEP RNA polymerase catalytic core is composed of four subunits: alpha, beta, beta', and beta''. When a (nuclear-encoded) sigma factor is associated with the core the holoenzyme is formed, which can initiate transcription.

It localises to the plastid. The protein resides in the chloroplast. The enzyme catalyses RNA(n) + a ribonucleoside 5'-triphosphate = RNA(n+1) + diphosphate. In terms of biological role, DNA-dependent RNA polymerase catalyzes the transcription of DNA into RNA using the four ribonucleoside triphosphates as substrates. The protein is DNA-directed RNA polymerase subunit beta of Piper cenocladum (Ant piper).